The sequence spans 57 residues: Andropin (57 aa).

The signal sequence occupies residues 1–23; it reads MKYFVVLVVLALILAITVGPSDA.

Belongs to the andropin family. As to expression, ejaculatory duct of adult males.

Its subcellular location is the secreted. In terms of biological role, male-specific peptide with moderate activity against Gram-positive bacteria. This is Andropin (Anp) from Drosophila mauritiana (Fruit fly).